An 85-amino-acid polypeptide reads, in one-letter code: Large ribosomal subunit protein bL27 (85 aa).

Positions 1–13 (MAKTKSGGSTSNG) are enriched in polar residues. The interval 1–26 (MAKTKSGGSTSNGRDSKGRRLGQKLG) is disordered.

It belongs to the bacterial ribosomal protein bL27 family.

The chain is Large ribosomal subunit protein bL27 from Mycoplasma mobile (strain ATCC 43663 / 163K / NCTC 11711) (Mesomycoplasma mobile).